The sequence spans 371 residues: Transcription factor bHLH77 (371 aa).

Disordered stretches follow at residues 1–25 (MNMD…FGNG), 65–206 (SGGI…SLAE), and 352–371 (QSNN…KLEP). Residues 85–96 (SQPTTQESNKSS) show a composition bias toward polar residues. Positions 128–142 (SPASSSLTASNSKVS) are enriched in low complexity. The segment covering 165–190 (GVEKCDSKGDNKDDAKPPEAPKDYIH) has biased composition (basic and acidic residues). The bHLH domain occupies 197-247 (QATDSHSLAERARREKISERMTLLQDLVPGCNRITGKAVMLDEIINYVQSL).

Homodimer. Interacts with IBH1. Expressed constitutively in roots, leaves, stems, and flowers.

Its subcellular location is the nucleus. This Arabidopsis thaliana (Mouse-ear cress) protein is Transcription factor bHLH77 (BHLH77).